A 259-amino-acid chain; its full sequence is 5'-nucleotidase SurE (259 aa).

A divalent metal cation contacts are provided by Asp8, Asp9, Ser39, and Asn93.

The protein belongs to the SurE nucleotidase family. Requires a divalent metal cation as cofactor.

The protein resides in the cytoplasm. It catalyses the reaction a ribonucleoside 5'-phosphate + H2O = a ribonucleoside + phosphate. Nucleotidase that shows phosphatase activity on nucleoside 5'-monophosphates. The chain is 5'-nucleotidase SurE from Thermococcus kodakarensis (strain ATCC BAA-918 / JCM 12380 / KOD1) (Pyrococcus kodakaraensis (strain KOD1)).